The sequence spans 113 residues: Vitelline membrane protein Vm32E (113 aa).

The N-terminal stretch at 1–17 is a signal peptide; the sequence is MKIVAFTLVAFVALAGA. The 38-residue stretch at 33–70 folds into the VM domain; that stretch reads GYPAPPCPTNYLFSCQPNLAPVPCAQQAPAYGSAGAYT.

The protein belongs to the vitelline membrane family.

Its subcellular location is the secreted. Major early eggshell protein. The sequence is that of Vitelline membrane protein Vm32E from Drosophila erecta (Fruit fly).